The sequence spans 474 residues: MTQKLHIKTWGCQMNEYDSSKMADLLNSTHGLELTEIPEEADVLLLNTCSIREKAQEKVFHQLGRWKELKKHKPGLVIGVGGCVASQEGEHIRTRAPYVDIIFGPQTLHRLPEMINQIRGGKSSVVDVSFPEIEKFDRLPEPRAEGPTAFVSIMEGCNKYCSFCVVPYTRGEEVSRPVDDVLFEIAQLAEQGVREVNLLGQNVNAYRGATHDDGICTFAELLRLVAAIDGIDRLRFTTSHPIEFTDDIIDVYRDTPELVSFLHLPVQSGSDRVLSMMKRNHTALEYKSIIRKLRAVRPEIQISSDFIVGFPGETAEDFEQTMNLIAQVNFDMSFSFIYSARPGTPAADMPDDVTEEEKKQRLYVLQQRINNQAAQFSRAMLGTEQRVLVEGPSKKDLMELTGRTETNRIVNFVGTPDMIGKFVDIKITDVFTNSLRGEVVRTEEQMGLRVVQSPQMVINRTRKEDELGVGRYHA.

Positions 3–120 (QKLHIKTWGC…LPEMINQIRG (118 aa)) constitute an MTTase N-terminal domain. [4Fe-4S] cluster contacts are provided by Cys12, Cys49, Cys83, Cys157, Cys161, and Cys164. The 233-residue stretch at 143–375 (RAEGPTAFVS…QQRINNQAAQ (233 aa)) folds into the Radical SAM core domain. A TRAM domain is found at 378–441 (RAMLGTEQRV…TNSLRGEVVR (64 aa)).

The protein belongs to the methylthiotransferase family. MiaB subfamily. Monomer. The cofactor is [4Fe-4S] cluster.

The protein resides in the cytoplasm. The catalysed reaction is N(6)-dimethylallyladenosine(37) in tRNA + (sulfur carrier)-SH + AH2 + 2 S-adenosyl-L-methionine = 2-methylsulfanyl-N(6)-dimethylallyladenosine(37) in tRNA + (sulfur carrier)-H + 5'-deoxyadenosine + L-methionine + A + S-adenosyl-L-homocysteine + 2 H(+). In terms of biological role, catalyzes the methylthiolation of N6-(dimethylallyl)adenosine (i(6)A), leading to the formation of 2-methylthio-N6-(dimethylallyl)adenosine (ms(2)i(6)A) at position 37 in tRNAs that read codons beginning with uridine. This chain is tRNA-2-methylthio-N(6)-dimethylallyladenosine synthase, found in Pasteurella multocida (strain Pm70).